Reading from the N-terminus, the 295-residue chain is uncharacterized protein (295 aa).

Basic residues predominate over residues 1-13 (MRHSVARPTRLPR). Disordered regions lie at residues 1 to 111 (MRHS…AGLS) and 183 to 295 (TSAF…PRDS). Residues 57–67 (AGPSAGAAARP) show a composition bias toward low complexity. Residues 68 to 77 (AAPPPQPREP) show a composition bias toward pro residues. Basic and acidic residues-rich tracts occupy residues 245 to 257 (LRPKGARADDRRP) and 280 to 295 (GEPHKAGEVGNHPRDS).

This is an uncharacterized protein from Homo sapiens (Human).